A 161-amino-acid polypeptide reads, in one-letter code: Putative 4-hydroxy-4-methyl-2-oxoglutarate aldolase (161 aa).

Substrate-binding positions include 78-81 and Arg100; that span reads GDVI. A divalent metal cation is bound at residue Asp101.

Belongs to the class II aldolase/RraA-like family. In terms of assembly, homotrimer. A divalent metal cation serves as cofactor.

It catalyses the reaction 4-hydroxy-4-methyl-2-oxoglutarate = 2 pyruvate. The catalysed reaction is oxaloacetate + H(+) = pyruvate + CO2. Its function is as follows. Catalyzes the aldol cleavage of 4-hydroxy-4-methyl-2-oxoglutarate (HMG) into 2 molecules of pyruvate. Also contains a secondary oxaloacetate (OAA) decarboxylase activity due to the common pyruvate enolate transition state formed following C-C bond cleavage in the retro-aldol and decarboxylation reactions. This chain is Putative 4-hydroxy-4-methyl-2-oxoglutarate aldolase, found in Mycobacterium avium (strain 104).